The sequence spans 373 residues: 2-oxoglutarate oxidoreductase subunit KorB (373 aa).

A disordered region spans residues 26–50; sequence TPSLTKNAGVPTTDQPQKGKDFTSD. Polar residues predominate over residues 27–41; that stretch reads PSLTKNAGVPTTDQP.

As to quaternary structure, KG oxidoreductase (KOR) is composed of KorA and KorB subunits. Mg(2+) is required as a cofactor.

The catalysed reaction is 2 oxidized [2Fe-2S]-[ferredoxin] + 2-oxoglutarate + CoA = succinyl-CoA + 2 reduced [2Fe-2S]-[ferredoxin] + CO2 + H(+). It functions in the pathway carbohydrate metabolism; tricarboxylic acid cycle. Functionally, component of KG oxidoreductase (KOR) that catalyzes the CoA-dependent oxidative decarboxylation of 2-oxoglutarate (alpha-ketoglutarate, KG) to succinyl-CoA. Methyl viologen can act as electron acceptor in vitro; the physiologic electron acceptor is unknown. Is involved in the alternative TCA pathway that functions concurrently with fatty acid beta-oxidation. Since a growing body of evidence indicates that lipids (for example cholesterol and fatty acids) are a predominant growth substrate for M.tuberculosis during infection, flux through KOR likely represents an important step in intermediary metabolism in vivo. KOR-dependent decarboxylation of KG also appears to be an important source of CO(2) in M.tuberculosis metabolism. The sequence is that of 2-oxoglutarate oxidoreductase subunit KorB (korB) from Mycobacterium tuberculosis (strain ATCC 25618 / H37Rv).